Consider the following 590-residue polypeptide: KNR4/SMI1 homolog 2 (590 aa).

Disordered stretches follow at residues 59–97 (SSSH…SNTN), 216–239 (FQHQ…ETHG), and 407–590 (TPQR…DVAL). Residues 71–85 (GSRTSLSRNGSSTTV) show a composition bias toward polar residues. Residues 217–226 (QHQQQQQQHQ) are compositionally biased toward low complexity. Residues 430-454 (PSMSGATANTNKSQNPLINMESSSK) are compositionally biased toward polar residues. Composition is skewed to basic and acidic residues over residues 470–481 (PEEPVKKSEVKS) and 489–515 (EPEK…AKED). A compositionally biased stretch (acidic residues) spans 516–528 (DKEEEEEEQEEEK). The span at 554–568 (TQKKNQSKKAKKQQQ) shows a compositional bias: basic residues. Over residues 576–590 (NDVEEVAEDLNDVAL) the composition is skewed to acidic residues.

The protein belongs to the KNR4/SMI1 family.

The sequence is that of KNR4/SMI1 homolog 2 from Debaryomyces hansenii (strain ATCC 36239 / CBS 767 / BCRC 21394 / JCM 1990 / NBRC 0083 / IGC 2968) (Yeast).